The following is a 144-amino-acid chain: Snaclec 6 (144 aa).

The first 23 residues, Met-1–Ala-23, serve as a signal peptide directing secretion. Cystine bridges form between Cys-25/Cys-36, Cys-53/Cys-142, and Cys-119/Cys-134. One can recognise a C-type lectin domain in the interval His-32–Lys-143.

This sequence belongs to the snaclec family. Heterodimer; disulfide-linked.

The protein localises to the secreted. Its function is as follows. Interferes with one step of hemostasis (modulation of platelet aggregation, or coagulation cascade, for example). This Daboia siamensis (Eastern Russel's viper) protein is Snaclec 6.